We begin with the raw amino-acid sequence, 68 residues long: ATP synthase F(0) complex subunit 8 (68 aa).

A helical transmembrane segment spans residues 8-24 (TWSITIVSMIITLFIMF). Position 54 is an N6-acetyllysine; alternate (Lys54). An N6-succinyllysine; alternate modification is found at Lys54. At Lys57 the chain carries N6-acetyllysine.

Belongs to the ATPase protein 8 family. As to quaternary structure, component of the ATP synthase complex composed at least of ATP5F1A/subunit alpha, ATP5F1B/subunit beta, ATP5MC1/subunit c (homooctomer), MT-ATP6/subunit a, MT-ATP8/subunit 8, ATP5ME/subunit e, ATP5MF/subunit f, ATP5MG/subunit g, ATP5MK/subunit k, ATP5MJ/subunit j, ATP5F1C/subunit gamma, ATP5F1D/subunit delta, ATP5F1E/subunit epsilon, ATP5PF/subunit F6, ATP5PB/subunit b, ATP5PD/subunit d, ATP5PO/subunit OSCP. ATP synthase complex consists of a soluble F(1) head domain (subunits alpha(3) and beta(3)) - the catalytic core - and a membrane F(0) domain - the membrane proton channel (subunits c, a, 8, e, f, g, k and j). These two domains are linked by a central stalk (subunits gamma, delta, and epsilon) rotating inside the F1 region and a stationary peripheral stalk (subunits F6, b, d, and OSCP). Interacts with PRICKLE3.

The protein localises to the mitochondrion membrane. Subunit 8, of the mitochondrial membrane ATP synthase complex (F(1)F(0) ATP synthase or Complex V) that produces ATP from ADP in the presence of a proton gradient across the membrane which is generated by electron transport complexes of the respiratory chain. ATP synthase complex consist of a soluble F(1) head domain - the catalytic core - and a membrane F(1) domain - the membrane proton channel. These two domains are linked by a central stalk rotating inside the F(1) region and a stationary peripheral stalk. During catalysis, ATP synthesis in the catalytic domain of F(1) is coupled via a rotary mechanism of the central stalk subunits to proton translocation. In vivo, can only synthesize ATP although its ATP hydrolase activity can be activated artificially in vitro. Part of the complex F(0) domain. The polypeptide is ATP synthase F(0) complex subunit 8 (Ceratotherium simum (White rhinoceros)).